A 454-amino-acid chain; its full sequence is Probable mitochondrial saccharopine dehydrogenase-like oxidoreductase At5g39410 (454 aa).

The residue at position 1 (methionine 1) is an N-acetylmethionine. The segment at 215-234 (RRSRPRRPRPTICGPPAKGP) is disordered.

It belongs to the saccharopine dehydrogenase family.

Its subcellular location is the mitochondrion membrane. The sequence is that of Probable mitochondrial saccharopine dehydrogenase-like oxidoreductase At5g39410 from Arabidopsis thaliana (Mouse-ear cress).